The chain runs to 867 residues: Schizokinen transporter SchT (867 aa).

Positions 40-62 (HPGKTQEAPSPTQLNTQSPAPNA) are disordered. The span at 46–62 (EAPSPTQLNTQSPAPNA) shows a compositional bias: polar residues. The TonB box motif lies at 185-192 (IELVVTAT). Residues 197–307 (PIQNVPRSIT…TGGVINIITR (111 aa)) enclose the TBDR plug domain. The region spanning 313–867 (KLTSRTEVGV…TLSIKYSFDW (555 aa)) is the TBDR beta-barrel domain. The TonB C-terminal box motif lies at 850 to 867 (AYAAARGRTLSIKYSFDW).

It belongs to the TonB-dependent receptor family.

The protein localises to the cell outer membrane. Its function is as follows. Involved in the TonB-dependent uptake of iron in complex with schizokinen, a dihydroxamate-type siderophore. The protein is Schizokinen transporter SchT of Nostoc sp. (strain PCC 7120 / SAG 25.82 / UTEX 2576).